The sequence spans 939 residues: MDYKSTLNLPQTPFPMKANLAQREPEQIERWRTLDLYRKVRSRRAGRDKFILHDGPPYANGEIHIGHAVNKILKDFIVKSRTLSGFDAPYVPGWDCHGLPIELMVEKKIGKAGHKVSPAEFRKACREYAAAQVDLQRREFIRLGVLGDWENPYLTMDFRFEADIVRALGRIAARGHLAKGAKPVHWCLDCGSALAEAEVEYENKHSPAIDVRFAVVDEFGLMARFHTADGALGEGPLSVVIWTTTPWTLPANQAVALNPELDYVVVQRTDIKERLVLADALMKDVMLRCGAEGYRVIGYCKGAALEGVQLRHPFYDRIVPVILGDHVTLDAGTGAVHTAPGHGQEDYAVGQRYGLAVDNPVGGDGRFLPNTELFAGEHVLSANDHVIEVLKERGALLHEARIEHSYPHCWRHKTPVIFRATPQWFIAMDKGELRRQALEAIGQVQWIPDWGQARIEAMVGNRPDWCISRQRTWGVPIPLFVHKETGALHPDTDRLIEEIAKKIETAGIDAWFELDPAELLGAEADRYGKIGDTLDVWFDSGVTHHAVLAQNPDLAFPADLYLEGSDQHRGWFQSSLMTSVAMSGQAPYKAVLTHGFTVDAEGKKMSKSRGNVVAPQKVMQTLGADVLRLWVAATDYRGEMTVSDEILKRISDVYRRIRNTARYLLANLDGFDPALHLVKPEDMLALDRWVVDRALAIQQEVIEAYETYQFNTIFQKTHHFCSVDLGSFYLDVLKDRQYTCKTDSLPRRSGQTAMYHIAEAMVRWLAPVLSFTAEEIWQYLPGQREESVFLSEWYDGLFGLDENSRCDRAFWDQMLKIREAVSKELEILRVRGEIGASLDAEVELFCDPPLFRKLSEAGDELRFVLLTSYATVKPAAEAGTDALPTEIPGLELKLAASGKPKCVRCWHHRHDVGTHPDHPELCGRCVDNVAGTGELRTFG.

Residues 57 to 67 carry the 'HIGH' region motif; it reads PYANGEIHIGH. Glu563 contributes to the L-isoleucyl-5'-AMP binding site. Residues 604-608 carry the 'KMSKS' region motif; sequence KMSKS. Lys607 provides a ligand contact to ATP. The Zn(2+) site is built by Cys902, Cys905, Cys922, and Cys925.

It belongs to the class-I aminoacyl-tRNA synthetase family. IleS type 1 subfamily. As to quaternary structure, monomer. Zn(2+) serves as cofactor.

Its subcellular location is the cytoplasm. It carries out the reaction tRNA(Ile) + L-isoleucine + ATP = L-isoleucyl-tRNA(Ile) + AMP + diphosphate. Its function is as follows. Catalyzes the attachment of isoleucine to tRNA(Ile). As IleRS can inadvertently accommodate and process structurally similar amino acids such as valine, to avoid such errors it has two additional distinct tRNA(Ile)-dependent editing activities. One activity is designated as 'pretransfer' editing and involves the hydrolysis of activated Val-AMP. The other activity is designated 'posttransfer' editing and involves deacylation of mischarged Val-tRNA(Ile). The protein is Isoleucine--tRNA ligase of Methylococcus capsulatus (strain ATCC 33009 / NCIMB 11132 / Bath).